A 504-amino-acid chain; its full sequence is 2,3-bisphosphoglycerate-independent phosphoglycerate mutase (504 aa).

D11 and S61 together coordinate Mn(2+). S61 functions as the Phosphoserine intermediate in the catalytic mechanism. Substrate-binding positions include H122, 152-153 (RD), R183, R189, 255-258 (RNDR), and K329. Mn(2+) contacts are provided by D396, H400, D437, H438, and H455.

It belongs to the BPG-independent phosphoglycerate mutase family. Monomer. Requires Mn(2+) as cofactor.

The enzyme catalyses (2R)-2-phosphoglycerate = (2R)-3-phosphoglycerate. It functions in the pathway carbohydrate degradation; glycolysis; pyruvate from D-glyceraldehyde 3-phosphate: step 3/5. In terms of biological role, catalyzes the interconversion of 2-phosphoglycerate and 3-phosphoglycerate. This chain is 2,3-bisphosphoglycerate-independent phosphoglycerate mutase, found in Bacteroides fragilis (strain YCH46).